Consider the following 457-residue polypeptide: 4-hydroxybenzoate transporter PcaK (457 aa).

Residues 1-34 (MPKEANMASQDYATQRSSLDAQALINDAPLSRYQ) lie on the Cytoplasmic side of the membrane. A helical membrane pass occupies residues 35–55 (WLIAIVCFLIVFVDGIDTAAM). Over 56-72 (GFIAPALAQDWGVDRSQ) the chain is Periplasmic. A helical membrane pass occupies residues 73-93 (LGPVMSAALGGMIIGALVSGP). The Cytoplasmic segment spans residues 94–101 (TADRFGRK). The helical transmembrane segment at 102-122 (IVLSMSMLVFGGFTLACAYST) threads the bilayer. Residues 123-128 (NLDSLV) lie on the Periplasmic side of the membrane. A helical membrane pass occupies residues 129 to 149 (IFRFLTGIGLGAAMPNATTLF). Residues 150–168 (SEYCPARIRSLLVTCMFCG) are Cytoplasmic-facing. The helical transmembrane segment at 169-189 (YNLGMAIGGFISSWLIPAFGW) threads the bilayer. Residues 190-191 (HS) are Periplasmic-facing. A helical transmembrane segment spans residues 192–212 (LFLLGGWAPLILMLLVIFFLP). Residues 213–274 (ESYRFLIVKG…LFSAKYVKGT (62 aa)) lie on the Cytoplasmic side of the membrane. The helical transmembrane segment at 275–295 (VLLWVTYFMGLVMIYLLTSWL) threads the bilayer. The Periplasmic portion of the chain corresponds to 296-310 (PTLMRETGASLERAA). A helical transmembrane segment spans residues 311-331 (FLGGLFQFGGVLSALFIGWAM). Topologically, residues 332-338 (DRFNPNR) are cytoplasmic. The chain crosses the membrane as a helical span at residues 339-359 (IIAGFYLAAGIFAVIVGQSLS). The Periplasmic portion of the chain corresponds to 360–363 (NPTL). The chain crosses the membrane as a helical span at residues 364–384 (LALFILCAGIAVNGAQSSMPV). The Cytoplasmic segment spans residues 385–400 (LSARFYPTQCRATGVA). A helical membrane pass occupies residues 401 to 421 (WMSGIGRFGAVFGAWIGAVLL). At 422–426 (GNNWS) the chain is on the periplasmic side. The helical transmembrane segment at 427-447 (FTMILSMLIIPAAAAAIAIFV) threads the bilayer. Residues 448 to 457 (KSLVAHTDAT) are Cytoplasmic-facing.

It belongs to the major facilitator superfamily. Aromatic acid:H(+) symporter (AAHS) (TC 2.A.1.15) family. In terms of assembly, homotrimer.

Its subcellular location is the cell inner membrane. In terms of biological role, uptake of 4-hydroxybenzoate (4-HB). Can also transport a variety of aromatic acids with hydroxyl substitutions at the 2-, 3- and 4-positions, such as salicylate, 2,4-dihydroxybenzoate, protocatechuate, 3-hydroxybenzoate, vanillate and gentisate. This is 4-hydroxybenzoate transporter PcaK from Acinetobacter baylyi (strain ATCC 33305 / BD413 / ADP1).